Reading from the N-terminus, the 314-residue chain is uncharacterized protein (314 aa).

The transit peptide at 1-29 directs the protein to the mitochondrion; it reads MMRLIRTLPLRCFKTRIRRQGSLLCLRCF. Residues 52–74 are disordered; that stretch reads SSSPLSKNKEKQEKPEKENEGKH. Positions 58-74 are enriched in basic and acidic residues; sequence KNKEKQEKPEKENEGKH. Residues 177–207 adopt a coiled-coil conformation; it reads LNEHHLQLLKLKRELNSIHDELNEIIIDLLQ. The helical transmembrane segment at 262–279 threads the bilayer; sequence GLLVILVLVCSIMIGVSA. The tract at residues 281-314 is disordered; that stretch reads KKERPGLQEPEEPEILAPKEDIDTTFPQDQHDID.

Its subcellular location is the mitochondrion membrane. This is an uncharacterized protein from Saccharomyces cerevisiae (strain ATCC 204508 / S288c) (Baker's yeast).